The sequence spans 401 residues: Methionine import ATP-binding protein MetN (401 aa).

In terms of domain architecture, ABC transporter spans 6-248 (ITFDHVVKEF…PQQPVTKRFI (243 aa)). ATP is bound at residue 45-52 (GYSGAGKS).

Belongs to the ABC transporter superfamily. Methionine importer (TC 3.A.1.24) family. In terms of assembly, the complex is composed of two ATP-binding proteins (MetN), two transmembrane proteins (MetI) and a solute-binding protein (MetQ).

It is found in the cell membrane. The enzyme catalyses L-methionine(out) + ATP + H2O = L-methionine(in) + ADP + phosphate + H(+). The catalysed reaction is D-methionine(out) + ATP + H2O = D-methionine(in) + ADP + phosphate + H(+). Functionally, part of the ABC transporter complex MetNIQ involved in methionine import. Responsible for energy coupling to the transport system. This Bifidobacterium longum (strain NCC 2705) protein is Methionine import ATP-binding protein MetN.